Consider the following 232-residue polypeptide: Pyridoxine 5'-phosphate synthase (232 aa).

N7 is a binding site for 3-amino-2-oxopropyl phosphate. Residue 9–10 (DH) participates in 1-deoxy-D-xylulose 5-phosphate binding. R18 contacts 3-amino-2-oxopropyl phosphate. Residue H43 is the Proton acceptor of the active site. 2 residues coordinate 1-deoxy-D-xylulose 5-phosphate: R45 and H50. E69 serves as the catalytic Proton acceptor. A 1-deoxy-D-xylulose 5-phosphate-binding site is contributed by T99. H185 functions as the Proton donor in the catalytic mechanism. 3-amino-2-oxopropyl phosphate-binding positions include G186 and 207–208 (GH).

It belongs to the PNP synthase family. As to quaternary structure, homooctamer; tetramer of dimers.

The protein resides in the cytoplasm. It carries out the reaction 3-amino-2-oxopropyl phosphate + 1-deoxy-D-xylulose 5-phosphate = pyridoxine 5'-phosphate + phosphate + 2 H2O + H(+). It functions in the pathway cofactor biosynthesis; pyridoxine 5'-phosphate biosynthesis; pyridoxine 5'-phosphate from D-erythrose 4-phosphate: step 5/5. Functionally, catalyzes the complicated ring closure reaction between the two acyclic compounds 1-deoxy-D-xylulose-5-phosphate (DXP) and 3-amino-2-oxopropyl phosphate (1-amino-acetone-3-phosphate or AAP) to form pyridoxine 5'-phosphate (PNP) and inorganic phosphate. The protein is Pyridoxine 5'-phosphate synthase of Gluconobacter oxydans (strain 621H) (Gluconobacter suboxydans).